Reading from the N-terminus, the 181-residue chain is Alkyl hydroperoxide reductase AhpD (181 aa).

Catalysis depends on Cys-130, which acts as the Proton donor. A disulfide bridge links Cys-130 with Cys-133. The Cysteine sulfenic acid (-SOH) intermediate role is filled by Cys-133.

It belongs to the AhpD family.

The enzyme catalyses N(6)-[(R)-dihydrolipoyl]-L-lysyl-[lipoyl-carrier protein] + a hydroperoxide = N(6)-[(R)-lipoyl]-L-lysyl-[lipoyl-carrier protein] + an alcohol + H2O. In terms of biological role, antioxidant protein with alkyl hydroperoxidase activity. Required for the reduction of the AhpC active site cysteine residues and for the regeneration of the AhpC enzyme activity. This chain is Alkyl hydroperoxide reductase AhpD, found in Gluconacetobacter diazotrophicus (strain ATCC 49037 / DSM 5601 / CCUG 37298 / CIP 103539 / LMG 7603 / PAl5).